A 156-amino-acid chain; its full sequence is Endoribonuclease YbeY (156 aa).

Residues His-122, His-126, and His-132 each coordinate Zn(2+).

The protein belongs to the endoribonuclease YbeY family. It depends on Zn(2+) as a cofactor.

It localises to the cytoplasm. Its function is as follows. Single strand-specific metallo-endoribonuclease involved in late-stage 70S ribosome quality control and in maturation of the 3' terminus of the 16S rRNA. The chain is Endoribonuclease YbeY from Bacillus cytotoxicus (strain DSM 22905 / CIP 110041 / 391-98 / NVH 391-98).